The following is a 221-amino-acid chain: Protein GrpE 1 (221 aa).

Disordered regions lie at residues 1 to 44 (MTEE…AAAQ) and 192 to 221 (VAEPQPGAQTVKADEAEAADDKESGGPEEG). Positions 26 to 44 (KAAPSEGAAPAGDAAAAAQ) are enriched in low complexity. Basic and acidic residues predominate over residues 203–221 (KADEAEAADDKESGGPEEG).

The protein belongs to the GrpE family. In terms of assembly, homodimer.

The protein localises to the cytoplasm. Its function is as follows. Participates actively in the response to hyperosmotic and heat shock by preventing the aggregation of stress-denatured proteins, in association with DnaK and GrpE. It is the nucleotide exchange factor for DnaK and may function as a thermosensor. Unfolded proteins bind initially to DnaJ; upon interaction with the DnaJ-bound protein, DnaK hydrolyzes its bound ATP, resulting in the formation of a stable complex. GrpE releases ADP from DnaK; ATP binding to DnaK triggers the release of the substrate protein, thus completing the reaction cycle. Several rounds of ATP-dependent interactions between DnaJ, DnaK and GrpE are required for fully efficient folding. This chain is Protein GrpE 1, found in Streptomyces avermitilis (strain ATCC 31267 / DSM 46492 / JCM 5070 / NBRC 14893 / NCIMB 12804 / NRRL 8165 / MA-4680).